The following is a 307-amino-acid chain: N-acetylneuraminate lyase (307 aa).

The aceneuramate site is built by Thr51 and Thr52. The active-site Proton donor is Tyr143. Lys173 (schiff-base intermediate with substrate) is an active-site residue. Positions 175, 199, 201, 202, and 218 each coordinate aceneuramate.

The protein belongs to the DapA family. NanA subfamily. In terms of assembly, homotetramer.

Its subcellular location is the cytoplasm. It catalyses the reaction aceneuramate = aldehydo-N-acetyl-D-mannosamine + pyruvate. The protein operates within amino-sugar metabolism; N-acetylneuraminate degradation. Functionally, catalyzes the cleavage of N-acetylneuraminic acid (sialic acid) to form pyruvate and N-acetylmannosamine via a Schiff base intermediate. It prevents sialic acids from being recycled and returning to the cell surface. Involved in the N-glycolylneuraminic acid (Neu5Gc) degradation pathway. In Danio rerio (Zebrafish), this protein is N-acetylneuraminate lyase.